A 493-amino-acid chain; its full sequence is Ferruginol synthase 1 (493 aa).

A helical transmembrane segment spans residues 2–22 (DSFPLLAALFFILAATWFISF). Residue Cys437 coordinates heme.

It belongs to the cytochrome P450 family. Requires heme as cofactor. In terms of tissue distribution, expressed in leaf glandular trichomes.

The protein localises to the membrane. The enzyme catalyses abieta-8,11,13-triene + reduced [NADPH--hemoprotein reductase] + O2 = ferruginol + oxidized [NADPH--hemoprotein reductase] + H2O + H(+). It carries out the reaction ferruginol + reduced [NADPH--hemoprotein reductase] + O2 = 11-hydroxyferruginol + oxidized [NADPH--hemoprotein reductase] + H2O + H(+). The catalysed reaction is miltiradiene + 2 reduced [NADPH--hemoprotein reductase] + 2 O2 = 11-oxomiltiradiene + 2 oxidized [NADPH--hemoprotein reductase] + 3 H2O + 2 H(+). The protein operates within secondary metabolite biosynthesis; terpenoid biosynthesis. Its function is as follows. Monooxygenase involved in the biosynthesis of labdane-related diterpenes natural products. Catalyzes the oxidation of abietatriene to produce ferruginol. Catalyzes the oxidation of ferruginol at C-12 to produce 11-hydroxyferruginol. Ferruginol and 11-hydroxyferruginol are intermediates in the biosynthesis of carnosate, a potent antioxidant. May also convert miltiradiene into 11-oxomiltiradiene. This Rosmarinus officinalis (Rosemary) protein is Ferruginol synthase 1.